We begin with the raw amino-acid sequence, 309 residues long: Taste receptor type 2 member 8 (309 aa).

Topologically, residues 1-7 are extracellular; that stretch reads MFSPADN. A helical transmembrane segment spans residues 8-28; the sequence is IFIILITGEFILGILGNGYIA. Residues 29 to 50 are Cytoplasmic-facing; the sequence is LVNWIDWIKKKKISTVDYILTN. The chain crosses the membrane as a helical span at residues 51–71; that stretch reads LVIARICLISVMVVNGIVIVL. Residues 72–82 are Extracellular-facing; it reads NPDVYTKNKQQ. Residues 83–103 form a helical membrane-spanning segment; that stretch reads IVIFTFWTFANYLNMWITTCL. Topologically, residues 104 to 131 are cytoplasmic; it reads NVFYFLKIASSSHPLFLWLKWKIDMVVH. Residues 132 to 152 form a helical membrane-spanning segment; it reads WILLGCFAISLLVSLIAAIVL. Residues 153-184 lie on the Extracellular side of the membrane; that stretch reads SCDYRFHAIAKHKRNITEMFXVSKIPYFEPLT. Residue Asn167 is glycosylated (N-linked (GlcNAc...) asparagine). A helical membrane pass occupies residues 185 to 205; that stretch reads LFNLFAIVPFIVSLISFFLLV. Topologically, residues 206–239 are cytoplasmic; it reads RSLWRHTKQIKLYATGSRDPSTEVHVRAIKTMTS. The chain crosses the membrane as a helical span at residues 240-260; that stretch reads FIFFFFLYFISSILMTFSYLM. The Extracellular portion of the chain corresponds to 261 to 266; the sequence is TKYKLA. The chain crosses the membrane as a helical span at residues 267 to 287; that stretch reads VEFGEIAAILYPLGHSLILIV. Residues 288–309 lie on the Cytoplasmic side of the membrane; sequence LNNKLRQIFVRMLTCRKIACVI.

Belongs to the G-protein coupled receptor T2R family.

It is found in the membrane. Its function is as follows. Receptor that may play a role in the perception of bitterness and is gustducin-linked. May play a role in sensing the chemical composition of the gastrointestinal content. The activity of this receptor may stimulate alpha gustducin, mediate PLC-beta-2 activation and lead to the gating of TRPM5. In Pan troglodytes (Chimpanzee), this protein is Taste receptor type 2 member 8 (TAS2R8).